The sequence spans 467 residues: MEDVAVAAALAPAPATAPVFSPAAAGLTLIAAAAADPIAAVVAGAMDGVVTVPPVRTASAVEDDAVAPGRGEEGGEASAVGSPCSVTSDCSSVASADFEGVGLGFFGAAADGGAAMVFEDSAASAATVEAEARVAAGARSVFAVECVPLWGHKSICGRRPEMEDAVVAVSRFFDIPLWMLTGNSVVDGLDPMSFRLPAHFFGVYDGHGGAQVANYCRERLHAALVEELSRIEGSVSGANLGSVEFKKKWEQAFVDCFSRVDEEVGGNASRGEAVAPETVGSTAVVAVICSSHIIVANCGDSRAVLCRGKQPVPLSVDHKPNREDEYARIEAEGGKVIQWNGYRVFGVLAMSRSIGDRYLKPWIIPVPEITIVPRAKDDECLVLASDGLWDVMSNEEVCDVARKRILLWHKKNGTNPASAPRSGDSSDPAAEAAAECLSKLALQKGSKDNISVIVVDLKAHRKFKSKS.

The interval Val61–Gly81 is disordered. The PPM-type phosphatase domain maps to Leu149–Leu457. The Mn(2+) site is built by Asp205, Gly206, Asp386, and Asp448.

Belongs to the PP2C family. Interacts with PYL9. It depends on Mg(2+) as a cofactor. Requires Mn(2+) as cofactor.

The protein resides in the nucleus. Its subcellular location is the cytoplasm. It localises to the cytosol. The catalysed reaction is O-phospho-L-seryl-[protein] + H2O = L-seryl-[protein] + phosphate. It catalyses the reaction O-phospho-L-threonyl-[protein] + H2O = L-threonyl-[protein] + phosphate. In terms of biological role, probable protein phosphatase that may function in abscisic acid (ABA) signaling. The chain is Probable protein phosphatase 2C 6 from Oryza sativa subsp. japonica (Rice).